We begin with the raw amino-acid sequence, 1127 residues long: DGKPGLPGPAGPPGPPGLGGNFAAQYDGVKAPDPGPGPMGMMGARGPPGPPGPPGAQGHTGHPGEPGEPGQTGPVGPRGPPGPPGKSGEDGNNGRPGKPGDRGAPGPQGARGFPGTPGLPGMKGHRGYTGLDGRKGEPGGAGAKGEPGAHGAAGSPGLAGSRGMPGERGRAGPAGPAGARGPAGPLGAAGPPGFPGGPGPKGELGPAGATGPSGAQGSRGEPGPNGAVGPVGPPGNPGNNGLNGAKGAAGTPGVAGAPGFPGPRGGPGPQGPQGAAGQRGLAGDPGTQGVKGDGGPKGEPGNSGPQGPPGPQGEEGKRGPTGELGATGPAGNRGARGAPGSRGMPGSEGRGASGAAGPRGPPGDAGRAGESGPAGLRGLPGSPGSSGPPGKEGAAGPAGQDGRGGPPGPTGPRGPSGEAGKPGDKGATGPTGLRGAPGPDGNNGATGATGPAGGPGEKGEQGAAGAPGFQGLPGPAGGAGEAGKPGDRGLPGDQGVSGPAGAKGERGNPGAAGASGPQGPLGPRGPAGAPGTDGGKGEPGAAGAAGGPGHQGPGGMPGERGAAGGPGGKGEKGEAGHRGPDGNAGRDGSRGMPGPAGPPGPTGANGDKGESGSFGPAGPAGARGASGERGEVGPAGAPGFAGPPGADGQTGARGERGPSGGKGESGPSGPAGPAGQSGPPGASGPAGPTGARGDNGPPGLTGFPGAAGRVGAAGPAGLVGPPGSAGPAGKDGPRGLRGDPGPSGPSGDQGMVGPPGPSGEKGPSGEPGTPGTSGPLGLQGFVGLPGARGDRGSPGGAGAVGEAGRVGPAGPAGARGAPGNLGLPGMTGPQGEAGREGNPGNDGPPGRPGAPGFKGDRGEPGSSGAMGLAGAPGPAGPSGGAGRPGNRGESGPGGAAGAVGPAGARGAAGPSGPRGEKGVAGEKGERGMKGLRGHAGLQGMPGPSGPSGDTGSAGPNGPAGPRGPAGPHGPPGKDGRAGGHGTLGSPGARGPPGYVGPAGPPGXPGLPGPAGPAGGGYDVSGYDEYRAAKDYEVDATLKSLNTQLENLLTPEGSRKETCLHAHPGSLARAVVVQGSNDVELRFTFSVLEDGCTRTNKPSRLPLLDLAPLDLGGADQEFGLDLGPVCFK.

Pro residues predominate over residues 1–16; it reads DGKPGLPGPAGPPGPP. The tract at residues 1–1017 is disordered; the sequence is DGKPGLPGPA…GPAGPAGGGY (1017 aa). Composition is skewed to low complexity over residues 171 to 191, 221 to 230, and 237 to 258; these read AGPAGPAGARGPAGPLGAAGP, EPGPNGAVGP, and PGNNGLNGAKGAAGTPGVAGAP. Residues 260–270 are compositionally biased toward pro residues; the sequence is FPGPRGGPGPQ. Low complexity predominate over residues 272-282; that stretch reads PQGAAGQRGLA. A compositionally biased stretch (gly residues) spans 289 to 298; it reads GVKGDGGPKG. 4 stretches are compositionally biased toward low complexity: residues 326–345, 355–398, 436–449, and 461–473; these read ATGPAGNRGARGAPGSRGMP, AAGP…AGPA, APGPDGNNGATGAT, and QGAAGAPGFQGLP. Over residues 474–483 the composition is skewed to gly residues; the sequence is GPAGGAGEAG. A compositionally biased stretch (low complexity) spans 508-518; sequence NPGAAGASGPQ. Residues 531 to 568 are compositionally biased toward gly residues; it reads GTDGGKGEPGAAGAAGGPGHQGPGGMPGERGAAGGPGG. The segment covering 569–580 has biased composition (basic and acidic residues); it reads KGEKGEAGHRGP. Composition is skewed to low complexity over residues 611–625 and 634–647; these read SGSFGPAGPAGARGA and PAGAPGFAGPPGAD. Gly residues predominate over residues 657 to 666; the sequence is GPSGGKGESG. Low complexity-rich tracts occupy residues 667–692, 703–730, and 758–778; these read PSGPAGPAGQSGPPGASGPAGPTGAR, FPGAAGRVGAAGPAGLVGPPGSAGPAGK, and SGEKGPSGEPGTPGTSGPLGL. Gly residues predominate over residues 792-801; that stretch reads GSPGGAGAVG. 2 stretches are compositionally biased toward low complexity: residues 802–824 and 860–872; these read EAGRVGPAGPAGARGAPGNLGLP and PGSSGAMGLAGAP. A compositionally biased stretch (gly residues) spans 876–897; it reads GPSGGAGRPGNRGESGPGGAAG. The span at 898 to 913 shows a compositional bias: low complexity; it reads AVGPAGARGAAGPSGP. The span at 914 to 928 shows a compositional bias: basic and acidic residues; the sequence is RGEKGVAGEKGERGM. Composition is skewed to low complexity over residues 937 to 956 and 986 to 997; these read LQGMPGPSGPSGDTGSAGPN and PGARGPPGYVGP. Positions 998–1010 are enriched in pro residues; sequence AGPPGXPGLPGPA. Residues 1093-1127 enclose the Fibrillar collagen NC1 domain; that stretch reads RTNKPSRLPLLDLAPLDLGGADQEFGLDLGPVCFK.

It belongs to the fibrillar collagen family.

It localises to the secreted. The protein localises to the extracellular space. The protein resides in the extracellular matrix. The sequence is that of Collagen alpha-2(I) chain from Epinephelus marginatus (Dusky grouper).